The sequence spans 510 residues: Acyl-CoA desaturase 1 (510 aa).

Residues 1–112 (MPTSGTTIEL…TLNNWHQHLN (112 aa)) lie on the Cytoplasmic side of the membrane. A helical transmembrane segment spans residues 113–133 (WLNMVLVCGMPMIGWYFALSG). Residues 134–138 (KVPLH) lie on the Lumenal side of the membrane. A helical transmembrane segment spans residues 139 to 159 (LNVFLFSVFYYAVGGVSITAG). Residues 160–255 (YHRLWSHRSY…DWTIRFQHRH (96 aa)) lie on the Cytoplasmic side of the membrane. 5 residues coordinate Fe cation: H161, H166, H198, H201, and H202. The Histidine box-1 signature appears at 161–166 (HRLWSH). A Histidine box-2 motif is present at residues 198–202 (HRIHH). A helical transmembrane segment spans residues 256-276 (YILLMLLTAFVIPTLICGYFF). The Lumenal segment spans residues 277–280 (NDYM). The chain crosses the membrane as a helical span at residues 281-301 (GGLIYAGFIRVFVIQQATFCI). Over 302-510 (NSLAHYIGTQ…GEIYETGKFF (209 aa)) the chain is Cytoplasmic. 4 residues coordinate Fe cation: H306, H335, H338, and H339. The Histidine box-3 signature appears at 335-339 (HNFHH). Residues 409 to 487 (LPMWDKQTFL…LADMRVAVIK (79 aa)) enclose the Cytochrome b5 heme-binding domain. Positions 444 and 470 each coordinate heme.

This sequence belongs to the fatty acid desaturase type 1 family. Fe(2+) is required as a cofactor.

It localises to the endoplasmic reticulum membrane. The enzyme catalyses octadecanoyl-CoA + 2 Fe(II)-[cytochrome b5] + O2 + 2 H(+) = (9Z)-octadecenoyl-CoA + 2 Fe(III)-[cytochrome b5] + 2 H2O. It catalyses the reaction hexadecanoyl-CoA + 2 Fe(II)-[cytochrome b5] + O2 + 2 H(+) = (9Z)-hexadecenoyl-CoA + 2 Fe(III)-[cytochrome b5] + 2 H2O. Functionally, stearoyl-CoA desaturase that utilizes O(2) and electrons from reduced cytochrome b5 to introduce the first double bond into saturated fatty acyl-CoA substrates. Catalyzes the insertion of a cis double bond at the delta-9 position into fatty acyl-CoA substrates including palmitoyl-CoA and stearoyl-CoA. Required for the biosynthesis of membrane phospholipids, cholesterol esters and triglycerides. Regulates fatty acid desaturation, that is, the ratio of unsaturated versus saturated fatty acyl chains, by competing with the acyltransferase STC1 for the common substrate C16:0-CoA. SCT1 sequesters C16:0-CoA into lipids, thereby shielding it from desaturation by OLE1. The sequence is that of Acyl-CoA desaturase 1 (OLE1) from Saccharomyces cerevisiae (strain ATCC 204508 / S288c) (Baker's yeast).